A 913-amino-acid polypeptide reads, in one-letter code: Anoctamin-5 (913 aa).

Topologically, residues 1–299 (MGDPDLLEVL…DLIKNYYGEK (299 aa)) are cytoplasmic. Residues 300–320 (IGIYFVFLGFYTEMLFFAAVV) traverse the membrane as a helical segment. Topologically, residues 321 to 380 (GLACFIYGLLSMEHNTSSTEICDPEIGGQMIMCPLCDQVCDYWRLNSTCLASKFSHLFDN) are extracellular. N-linked (GlcNAc...) asparagine glycans are attached at residues asparagine 335, asparagine 366, and asparagine 380. Residues 381–401 (ESTVFFAIFMGIWVTLFLEFW) form a helical membrane-spanning segment. Over 402 to 462 (KQRQARLEYE…YTRIPWYFLS (61 aa)) the chain is Cytoplasmic. A helical membrane pass occupies residues 463–483 (GATVTLWMSLVVTSMVAVIVY). Over 484–511 (RLSVFATFASFMESDASLKQVKSFLTPQ) the chain is Extracellular. The helical transmembrane segment at 512–532 (ITTSLTGSCLNFIVILILNFF) threads the bilayer. At 533–557 (YEKISAWITKMEIPRTYQEYESSLT) the chain is on the cytoplasmic side. A helical transmembrane segment spans residues 558–578 (LKMFLFQFVNFYSSCFYVAFF). The Extracellular segment spans residues 579–679 (KGKFVGYPGK…FYEYLETVTQ (101 aa)). Residues 680–700 (FGFVTLFVASFPLAPLLALIN) traverse the membrane as a helical segment. Topologically, residues 701–732 (NIVEIRVDAWKLTTQYRRTVASKAHSIGVWQD) are cytoplasmic. A helical membrane pass occupies residues 733–753 (ILYGMAVLSVATNAFIVAFTS). Over 754–834 (DIIPRLVYYY…FWHVLAAKMT (81 aa)) the chain is Extracellular. Residues asparagine 768, asparagine 778, and asparagine 791 are each glycosylated (N-linked (GlcNAc...) asparagine). A helical membrane pass occupies residues 835–855 (FIIVMEHVVFLVKFLLAWMIP). The Cytoplasmic segment spans residues 856–913 (DVPKDVVERIKREKLMTIKILHDFELNKLKENLGINSNEFAKHVMIEENKAQLAKSTL).

This sequence belongs to the anoctamin family. Highly expressed in brain, heart, kidney, lung, and skeletal muscle. Weakly expressed in bone marrow, fetal liver, placenta, spleen, thymus, osteoblasts and periodontal ligament cells.

The protein resides in the endoplasmic reticulum membrane. The protein localises to the cell membrane. Its function is as follows. Plays a role in plasma membrane repair in a process involving annexins. Does not exhibit calcium-activated chloride channel (CaCC) activity. The polypeptide is Anoctamin-5 (ANO5) (Homo sapiens (Human)).